Here is a 146-residue protein sequence, read N- to C-terminus: Hemoglobin subunit beta (146 aa).

An N-acetylvaline modification is found at V1. The Globin domain occupies 2–146 (HLTAEEKSLV…VANALAHKYH (145 aa)). S44 carries the post-translational modification Phosphoserine. An N6-acetyllysine modification is found at K59. A heme b-binding site is contributed by H63. Position 82 is an N6-acetyllysine (K82). H92 is a binding site for heme b. C93 carries the S-nitrosocysteine modification. At K144 the chain carries N6-acetyllysine.

Belongs to the globin family. As to quaternary structure, heterotetramer of two alpha chains and two beta chains. As to expression, red blood cells.

Functionally, involved in oxygen transport from the lung to the various peripheral tissues. This chain is Hemoglobin subunit beta (HBB), found in Canis latrans (Coyote).